Here is a 505-residue protein sequence, read N- to C-terminus: Trans-cinnamate 4-monooxygenase (505 aa).

The chain crosses the membrane as a helical span at residues Leu-3–Val-23. (E)-cinnamate is bound by residues Arg-213–Gln-218 and Ala-306. A heme-binding site is contributed by Cys-447.

The protein belongs to the cytochrome P450 family. It depends on heme as a cofactor. In terms of tissue distribution, mostly expressed in stems, and, to a lower extent, in bulbs, roots, leaves and flowers.

Its subcellular location is the membrane. It catalyses the reaction (E)-cinnamate + reduced [NADPH--hemoprotein reductase] + O2 = (E)-4-coumarate + oxidized [NADPH--hemoprotein reductase] + H2O + H(+). The protein operates within alkaloid biosynthesis. Its pathway is phenylpropanoid metabolism; trans-4-coumarate biosynthesis; trans-4-coumarate from trans-cinnamate: step 1/1. Functionally, catalyzes the first oxidative step of the phenylpropanoid pathway in higher plants by transforming trans-cinnamate into p-coumarate. The compounds formed by this pathway are essential components for lignification, pollination, and defense against ultraviolet light, predators and pathogens. Trans-4-coumarate is a precursor to all amaryllidaceae alkaloids such as galanthamine, lycorine and haemanthamine, and including haemanthamine- and crinamine-type alkaloids, promising anticancer agents. The chain is Trans-cinnamate 4-monooxygenase from Narcissus pseudonarcissus (Daffodil).